Reading from the N-terminus, the 308-residue chain is MAMAETPVPKKGDKTKVAAERRGGWLSRIAPGVRGAFAKRETPENLWVKCPDTGEMIYRSDLEAALWVTPAGRHMRIGPELRFKFTFDDGEHEVLPTPAVFEDPLRFSDGKPYKERLAAARKATGEQDAMAIGYGKVGGAPAVVLVQDFAFMGGSLGMAAGEGFIAAAEAAIARQVPLVAFTAAGGARMQEGALSLMQMARTTLAINMLKDAGLPYVVVLTDPTTGGVTASYAMLGDVHLAEPGALIGFAGPRVIEQTIRETLPPGFQRSEYLVEKGMVDRVTPRKELPAVLGSILGTLMMGRGLKAA.

A CoA carboxyltransferase N-terminal domain is found at 46 to 308 (LWVKCPDTGE…LMMGRGLKAA (263 aa)).

Belongs to the AccD/PCCB family. As to quaternary structure, acetyl-CoA carboxylase is a heterohexamer composed of biotin carboxyl carrier protein (AccB), biotin carboxylase (AccC) and two subunits each of ACCase subunit alpha (AccA) and ACCase subunit beta (AccD).

The protein localises to the cytoplasm. The catalysed reaction is N(6)-carboxybiotinyl-L-lysyl-[protein] + acetyl-CoA = N(6)-biotinyl-L-lysyl-[protein] + malonyl-CoA. It participates in lipid metabolism; malonyl-CoA biosynthesis; malonyl-CoA from acetyl-CoA: step 1/1. In terms of biological role, component of the acetyl coenzyme A carboxylase (ACC) complex. Biotin carboxylase (BC) catalyzes the carboxylation of biotin on its carrier protein (BCCP) and then the CO(2) group is transferred by the transcarboxylase to acetyl-CoA to form malonyl-CoA. The chain is Acetyl-coenzyme A carboxylase carboxyl transferase subunit beta from Caulobacter sp. (strain K31).